Reading from the N-terminus, the 444-residue chain is UDP-N-acetylmuramate--L-alanine ligase (444 aa).

ATP is bound at residue 110–116; the sequence is GAHGKTS.

This sequence belongs to the MurCDEF family.

It localises to the cytoplasm. It catalyses the reaction UDP-N-acetyl-alpha-D-muramate + L-alanine + ATP = UDP-N-acetyl-alpha-D-muramoyl-L-alanine + ADP + phosphate + H(+). Its pathway is cell wall biogenesis; peptidoglycan biosynthesis. Functionally, cell wall formation. This chain is UDP-N-acetylmuramate--L-alanine ligase, found in Streptococcus sanguinis (strain SK36).